A 503-amino-acid chain; its full sequence is Annexin A11 (503 aa).

2 stretches are compositionally biased toward pro residues: residues 80–117 (GYPP…PGMP) and 123–167 (PGAP…PVPS). The disordered stretch occupies residues 80 to 172 (GYPPVPPGGF…QPVPSYPGYS (93 aa)). 4 Annexin repeats span residues 198–269 (FDPL…ALMK), 270–341 (TPVL…SLSQ), 353–425 (SLVQ…AVVK), and 429–500 (NTPA…KICG). Lys246 and Lys253 each carry N6-acetyllysine. Lys477 is modified (N6-acetyllysine).

The protein belongs to the annexin family. Interacts with S100A6. Interacts with PDCD6 in a calcium-dependent manner. Interacts with KIF23 during cytokinesis.

The protein resides in the cytoplasm. The protein localises to the melanosome. Its subcellular location is the nucleus envelope. It localises to the nucleus. It is found in the nucleoplasm. The protein resides in the cytoskeleton. The protein localises to the spindle. Required for midbody formation and completion of the terminal phase of cytokinesis. Binds specifically to calcyclin in a calcium-dependent manner. In Mus musculus (Mouse), this protein is Annexin A11 (Anxa11).